A 94-amino-acid polypeptide reads, in one-letter code: MDLRVIEKDDAELTIEVAGENHTFMNVLKGTLLETDGVTAASYDMNPEQSGGQTEPLLTIKTDGDVDPVDALQAAAGHTSQKLQSFADTFEAAV.

It belongs to the archaeal Rpo11/eukaryotic RPB11/RPC19 RNA polymerase subunit family. Part of the RNA polymerase complex.

Its subcellular location is the cytoplasm. The catalysed reaction is RNA(n) + a ribonucleoside 5'-triphosphate = RNA(n+1) + diphosphate. DNA-dependent RNA polymerase (RNAP) catalyzes the transcription of DNA into RNA using the four ribonucleoside triphosphates as substrates. In Halobacterium salinarum (strain ATCC 700922 / JCM 11081 / NRC-1) (Halobacterium halobium), this protein is DNA-directed RNA polymerase subunit Rpo11.